We begin with the raw amino-acid sequence, 2093 residues long: Nuclear-pore anchor (2093 aa).

4 coiled-coil regions span residues Leu-57–Leu-362, Met-439–Gln-529, Asp-570–Glu-627, and Gln-688–Lys-1172. The segment at Asn-1175–Asp-1198 is disordered. Positions Arg-1182–Thr-1191 are enriched in low complexity. Coiled-coil stretches lie at residues Leu-1208–Ala-1252 and Glu-1293–Ala-1585. Disordered stretches follow at residues Tyr-1453–Glu-1489, Lys-1525–Lys-1555, and Ser-1627–Pro-2093. Positions Gln-1470–Thr-1483 are enriched in basic and acidic residues. Polar residues predominate over residues Ser-1652–Leu-1674. 2 stretches are compositionally biased toward basic and acidic residues: residues Lys-1710 to Val-1719 and Asp-1729 to Glu-1740. Residues Ser-1764–Glu-1779 show a composition bias toward polar residues. Residues Lys-1789 to Ala-1808 are compositionally biased toward basic and acidic residues. The stretch at Thr-1818–Glu-1849 forms a coiled coil. 2 stretches are compositionally biased toward acidic residues: residues Gly-1821 to Asn-1830 and Tyr-1838 to Thr-1903. The span at Thr-1921–Arg-1931 shows a compositional bias: polar residues. The span at Ala-1935–Ala-1963 shows a compositional bias: acidic residues. The span at Thr-1984 to Ser-2009 shows a compositional bias: low complexity. Ser-2022 is subject to Phosphoserine.

As to quaternary structure, part of the nuclear pore complex (NPC). The NPC has an eight-fold symmetrical structure comprising a central transport channel and two rings, the cytoplasmic and nuclear rings, to which eight filaments are attached. The cytoplasmic filaments have loose ends, while the nuclear filaments are joined in a distal ring, forming a nuclear basket. NPCs are highly dynamic in configuration and composition, and can be devided in 3 subcomplexes, the NUP62 subcomplex, the NUP107-160 subcomplex and the NUP93 subcomplex, containing approximately 30 different nucleoporin proteins. Interacts with MAD1 and (via N-terminus) with ESD4. Ubiquitous. Highest expression in the shoot apical region.

Its subcellular location is the nucleus envelope. The protein resides in the nucleus membrane. It is found in the nucleus. The protein localises to the nuclear pore complex. Component of the nuclear pore complex. Acts as a docking site for activities required for desumoylation and mRNA export. Required for the proper expression or localization of a subset of miRNAs. Plays a role in meristematic cell division by interacting with spindle assembly checkpoint proteins. In Arabidopsis thaliana (Mouse-ear cress), this protein is Nuclear-pore anchor.